Consider the following 223-residue polypeptide: Receptor-transporting protein 2 (223 aa).

At 1–193 (MSTSLTTCEW…KKGQAGFISS (193 aa)) the chain is on the cytoplasmic side. A 3CxxC-type zinc finger spans residues 52-161 (ASGRFHCSWC…SEFCEACQEG (110 aa)). The helical transmembrane segment at 194–216 (FFSFRWCLFWGTLCLVIVYLQFF) threads the bilayer. Over 217 to 223 (RGRSGFL) the chain is Extracellular.

Belongs to the TMEM7 family. In terms of assembly, interacts with olfactory receptors. Predominantly expressed in olfactory and vomeronasal organs, in mature olfactory sensory neurons.

The protein resides in the cell membrane. Functionally, specifically promotes functional cell surface expression of olfactory receptors, but not of other GPCRs. This is Receptor-transporting protein 2 (Rtp2) from Mus musculus (Mouse).